The primary structure comprises 166 residues: NADPH-dependent 7-cyano-7-deazaguanine reductase (166 aa).

Cysteine 57 (thioimide intermediate) is an active-site residue. Aspartate 64 serves as the catalytic Proton donor. Residues 79–81 and 98–99 contribute to the substrate site; these read VES and HE.

This sequence belongs to the GTP cyclohydrolase I family. QueF type 1 subfamily.

It localises to the cytoplasm. The enzyme catalyses 7-aminomethyl-7-carbaguanine + 2 NADP(+) = 7-cyano-7-deazaguanine + 2 NADPH + 3 H(+). It participates in tRNA modification; tRNA-queuosine biosynthesis. Its function is as follows. Catalyzes the NADPH-dependent reduction of 7-cyano-7-deazaguanine (preQ0) to 7-aminomethyl-7-deazaguanine (preQ1). This is NADPH-dependent 7-cyano-7-deazaguanine reductase from Staphylococcus aureus (strain MRSA252).